A 472-amino-acid polypeptide reads, in one-letter code: Carboxypeptidase E (472 aa).

The N-terminal stretch at 1 to 21 (MLHAMRPVLLVAALLAVTAHA) is a signal peptide. Positions 39 to 359 (HYHNQAQLEA…KSIFEYVWKS (321 aa)) constitute a Peptidase M14 domain. Zn(2+)-binding residues include H101 and E104. A glycan (N-linked (GlcNAc...) asparagine) is linked at N134. Residue H232 participates in Zn(2+) binding. The active-site Proton donor/acceptor is the E329. N-linked (GlcNAc...) asparagine glycosylation is found at N385 and N428.

It belongs to the peptidase M14 family. The cofactor is Zn(2+). Expression is restricted to the nervous system.

The protein resides in the cell projection. Its subcellular location is the axon. It localises to the perikaryon. The protein localises to the cytoplasmic vesicle. It is found in the secretory vesicle lumen. The enzyme catalyses Release of C-terminal arginine or lysine residues from polypeptides.. During FMRFamide-like peptide (FaRPs or FLP) and neuropeptide-like protein (NLP) precursor processing, catalyzes the removal of Arg or Lys residues from the C-terminus following the initial endoprotease cleavage. By processing neuropeptides, modulates basal acetylcholine release at the ventral cord neuromuscular junctions. Involved in egg-laying, defecation and locomotion. By processing FLP neuropeptides, regulates the turning step of male mating behavior. Involved in reducing pharyngeal pumping in response to high CO(2) levels. This Caenorhabditis elegans protein is Carboxypeptidase E.